The chain runs to 405 residues: Serine--glyoxylate aminotransferase (405 aa).

At Lys-196 the chain carries N6-(pyridoxal phosphate)lysine.

Belongs to the class-V pyridoxal-phosphate-dependent aminotransferase family. It depends on pyridoxal 5'-phosphate as a cofactor.

The enzyme catalyses glyoxylate + L-serine = 3-hydroxypyruvate + glycine. It functions in the pathway one-carbon metabolism; formaldehyde assimilation via serine pathway. The sequence is that of Serine--glyoxylate aminotransferase (sgaA) from Hyphomicrobium methylovorum.